The chain runs to 222 residues: Methionine import system permease protein MetP (222 aa).

Residues 18–212 (TYETLYMTLI…IIVFIIQIIG (195 aa)) form the ABC transmembrane type-1 domain. 5 consecutive transmembrane segments (helical) span residues 25 to 45 (TLIS…LLFL), 73 to 93 (FLIL…TILG), 97 to 117 (ALPA…EIAL), 152 to 172 (ISGI…AGAI), and 195 to 215 (FVAT…GDLI).

The protein belongs to the binding-protein-dependent transport system permease family. CysTW subfamily. The complex is composed of two ATP-binding proteins (MetN), two transmembrane proteins (MetP) and a solute-binding protein (MetQ).

It is found in the cell membrane. Part of the ABC transporter complex MetNPQ involved in methionine import. Responsible for the translocation of the substrate across the membrane. It has also been shown to be involved in methionine sulfoxide transport. In Bacillus subtilis (strain 168), this protein is Methionine import system permease protein MetP (metP).